Here is a 1054-residue protein sequence, read N- to C-terminus: Bifunctional cytochrome P450/NADPH--P450 reductase 2 (1054 aa).

Residues 1 to 475 are cytochrome P450; sequence MKQASAIPQP…QADIKAETKP (475 aa). A heme-binding site is contributed by C403. Residues 462 to 480 show a composition bias toward basic and acidic residues; sequence QRKEQADIKAETKPKETKP. The segment at 462–482 is disordered; that stretch reads QRKEQADIKAETKPKETKPKH. The segment at 476-1053 is NADPH--P450 reductase; sequence KETKPKHGTP…RRYVKDVWTG (578 aa). The Flavodoxin-like domain maps to 486–625; the sequence is LLVLFGSNLG…HRESWENRFW (140 aa). FMN is bound by residues 492-497, 539-542, 573-575, and 581-583; these read SNLGTA, SYNG, CGN, and TYQ. An FAD-binding FR-type domain is found at 663-896; sequence YGAFEGIVLE…RTPQSGFQMP (234 aa).

The protein in the N-terminal section; belongs to the cytochrome P450 family. FAD serves as cofactor. It depends on FMN as a cofactor. Requires heme b as cofactor.

It is found in the cytoplasm. The catalysed reaction is an organic molecule + reduced [NADPH--hemoprotein reductase] + O2 = an alcohol + oxidized [NADPH--hemoprotein reductase] + H2O + H(+). The enzyme catalyses 2 oxidized [cytochrome P450] + NADPH = 2 reduced [cytochrome P450] + NADP(+) + H(+). In terms of biological role, functions as a fatty acid monooxygenase. Catalyzes hydroxylation of a range of medium to long-chain fatty acids, with a preference for long-chain unsaturated and branched-chain fatty acids over saturated fatty acids. Hydroxylation of myristic acid occurs mainly at the omega-2 and omega-3 positions, in approximately equal proportions. Also displays a NADPH-dependent reductase activity in the C-terminal domain, which allows electron transfer from NADPH to the heme iron of the cytochrome P450 N-terminal domain. The sequence is that of Bifunctional cytochrome P450/NADPH--P450 reductase 2 from Bacillus subtilis (strain 168).